The following is a 223-amino-acid chain: Cytidylate kinase (223 aa).

Residue 11–19 coordinates ATP; that stretch reads GPAGVGKST.

The protein belongs to the cytidylate kinase family. Type 1 subfamily.

It localises to the cytoplasm. The catalysed reaction is CMP + ATP = CDP + ADP. It catalyses the reaction dCMP + ATP = dCDP + ADP. The sequence is that of Cytidylate kinase from Maridesulfovibrio salexigens (strain ATCC 14822 / DSM 2638 / NCIMB 8403 / VKM B-1763) (Desulfovibrio salexigens).